We begin with the raw amino-acid sequence, 776 residues long: 5-methyltetrahydropteroyltriglutamate--homocysteine methyltransferase (776 aa).

5-methyltetrahydropteroyltri-L-glutamate is bound by residues Arg-16–Lys-19 and Lys-112. Residues Ile-435–Ser-437 and Glu-488 each bind L-homocysteine. L-methionine contacts are provided by residues Ile-435 to Ser-437 and Glu-488. 5-methyltetrahydropteroyltri-L-glutamate-binding positions include Arg-519 to Cys-520 and Trp-565. Asp-603 is an L-homocysteine binding site. Asp-603 provides a ligand contact to L-methionine. Glu-609 contributes to the 5-methyltetrahydropteroyltri-L-glutamate binding site. His-645, Cys-647, and Glu-669 together coordinate Zn(2+). The Proton donor role is filled by His-698. Zn(2+) is bound at residue Cys-730.

This sequence belongs to the vitamin-B12 independent methionine synthase family. Zn(2+) serves as cofactor.

It carries out the reaction 5-methyltetrahydropteroyltri-L-glutamate + L-homocysteine = tetrahydropteroyltri-L-glutamate + L-methionine. The protein operates within amino-acid biosynthesis; L-methionine biosynthesis via de novo pathway; L-methionine from L-homocysteine (MetE route): step 1/1. In terms of biological role, catalyzes the transfer of a methyl group from 5-methyltetrahydrofolate to homocysteine resulting in methionine formation. The protein is 5-methyltetrahydropteroyltriglutamate--homocysteine methyltransferase of Ralstonia pickettii (strain 12J).